We begin with the raw amino-acid sequence, 248 residues long: Ubiquinone biosynthesis O-methyltransferase (248 aa).

4 residues coordinate S-adenosyl-L-methionine: Arg-41, Gly-72, Asp-93, and Met-136.

Belongs to the methyltransferase superfamily. UbiG/COQ3 family.

The enzyme catalyses a 3-demethylubiquinol + S-adenosyl-L-methionine = a ubiquinol + S-adenosyl-L-homocysteine + H(+). It catalyses the reaction a 3-(all-trans-polyprenyl)benzene-1,2-diol + S-adenosyl-L-methionine = a 2-methoxy-6-(all-trans-polyprenyl)phenol + S-adenosyl-L-homocysteine + H(+). Its pathway is cofactor biosynthesis; ubiquinone biosynthesis. In terms of biological role, O-methyltransferase that catalyzes the 2 O-methylation steps in the ubiquinone biosynthetic pathway. In Rhizobium johnstonii (strain DSM 114642 / LMG 32736 / 3841) (Rhizobium leguminosarum bv. viciae), this protein is Ubiquinone biosynthesis O-methyltransferase.